A 347-amino-acid polypeptide reads, in one-letter code: D-alanine--D-alanine ligase (347 aa).

One can recognise an ATP-grasp domain in the interval 131–333 (KRVLESAGIA…YPELIERLVD (203 aa)). Residue 161 to 216 (EEKLAYPVFTKPSNMGSSVGISKSENQEELRQALKLAFRYDSRVLVEQGVNAREIE) coordinates ATP. Residues Asp287, Glu300, and Asn302 each contribute to the Mg(2+) site.

The protein belongs to the D-alanine--D-alanine ligase family. Mg(2+) serves as cofactor. It depends on Mn(2+) as a cofactor.

The protein localises to the cytoplasm. The catalysed reaction is 2 D-alanine + ATP = D-alanyl-D-alanine + ADP + phosphate + H(+). Its pathway is cell wall biogenesis; peptidoglycan biosynthesis. Functionally, cell wall formation. The chain is D-alanine--D-alanine ligase from Streptococcus pneumoniae (strain ATCC BAA-255 / R6).